Reading from the N-terminus, the 955-residue chain is MDQNGVNEGTGHKSVDLIQIMDKWQKKWTEAKIFEAEHDLRDKFFITAAFPYLNGVLHAGHLRTFTIPETIARYQRMKNKNVLWTFGFHVTGTPILGLANQIKDRKEDIIWAYNNLHNIPMDELLKLKTPEAIVECFSKKATEAFKRMGFSLDWRRNFKTDDKVFSKFIEWQFYKLKEMGHITKGSHPVRYCPKCENPVEDHDLLHGEESTTVEYSLIKFTSEFDGKEIIMPMATLRPETLFGVTNAWVNPNEIYVMAKVHDEIQKLDGEDVELKYNGIWIVGKECADKLKEQDRKIEILKEIKGNELLGLKIKNPVTKKEVPLLPADFVEMGIGTGWVMSVPAHAPYDYVALRDLGKIEEVGLIPLIEIEGYDKYPAKEIVEKLGVKDQNDDELLEQATSKIYKDEFHKGKLNENCGEYAGISVKDIKEKLTKDYLNSNIAEIMYEFSEQKVVCRCGEKCIIKTVKGQWFINYSDENWKKLAHECIDNMNFAPENIRQEFHNKVDWMKDKACARKKGLGTILPFDENWIIESLSDSTIYMAYYTIARFINEGLTPEQLIPELFEYVYLGNGNVEEITKNSNISKETIEEMRKEFLYYYPLDWRCSAKDLIPNHLTFMIFNHVALFGREHWPRGIEINGYVTIEGKKLSKSKGPVLPVSEVAENFGADVARFYITTCAELPQDADVKFKEMEKARDNLIKLYELAVSVMEEEKTEKELSLIDKWLLHKTYSSINGAETAYEEFQLRKIGLMFYELINDLRWYKRRGGENNNVLKEVVEIWTKLLSPVTPHLCEEIWEKLGYAGFISQELYPEIKLEMVNEDLELGEEFIKSAMEDIRNINGVAKINPEKMYLYTADDWKYDLLEFMNENSEKNVKALIPMVMKEDKFKRHGKEVMKLINEIMKIGVKKAIAEVEILENAKTFIESEFDCEVIVNGEDVKGKKKFAIPYKPAIYME.

The 'HIGH' region signature appears at 51-61 (PYLNGVLHAGH). Positions 647-651 (KLSKS) match the 'KMSKS' region motif. Lys-650 serves as a coordination point for ATP.

The protein belongs to the class-I aminoacyl-tRNA synthetase family.

The protein localises to the cytoplasm. The catalysed reaction is tRNA(Leu) + L-leucine + ATP = L-leucyl-tRNA(Leu) + AMP + diphosphate. In Methanococcus maripaludis (strain C5 / ATCC BAA-1333), this protein is Leucine--tRNA ligase.